A 264-amino-acid chain; its full sequence is 2-dehydro-3-deoxy-D-gluconate 5-dehydrogenase (264 aa).

14–38 (LVTGSTHGLGMAMAKGLGLAGATIV) is an NAD(+) binding site. Serine 147 serves as a coordination point for substrate. Residue tyrosine 160 is the Proton acceptor of the active site.

Belongs to the short-chain dehydrogenases/reductases (SDR) family. Homotetramer.

It is found in the cytoplasm. The catalysed reaction is 2-dehydro-3-deoxy-D-gluconate + NAD(+) = 3-deoxy-D-glycero-2,5-hexodiulosonate + NADH + H(+). Its function is as follows. 2-dehydro-3-deoxy-D-gluconate 5-dehydrogenase involved in ulvan degradation. Ulvan is the main polysaccharide component of the Ulvales (green seaweed) cell wall. It is composed of disaccharide building blocks comprising 3-sulfated rhamnose (Rha3S) linked to D-glucuronic acid (GlcA), L-iduronic acid (IduA), or D-xylose (Xyl). Catalyzes the reversible reduction of 2,5-diketo-3-deoxygluconate (DKII or 4,6-dihydroxy-2,5-dioxohexanoate) into 2-keto-3-deoxygluconate (KDG or 2-dehydro-3-deoxygluconate) with a concomitant oxidation of NADH. In Formosa agariphila (strain DSM 15362 / KCTC 12365 / LMG 23005 / KMM 3901 / M-2Alg 35-1), this protein is 2-dehydro-3-deoxy-D-gluconate 5-dehydrogenase (kduD).